A 243-amino-acid polypeptide reads, in one-letter code: Small ribosomal subunit protein uS3 (243 aa).

The 72-residue stretch at 39–110 (IRTFIQKKYS…QVRINVVEVE (72 aa)) folds into the KH type-2 domain. Positions 221 to 243 (GAIPRRKGSRKPQQFEDRSNENS) are disordered. The segment covering 233–243 (QQFEDRSNENS) has biased composition (basic and acidic residues).

It belongs to the universal ribosomal protein uS3 family. Part of the 30S ribosomal subunit. Forms a tight complex with proteins S10 and S14.

Its function is as follows. Binds the lower part of the 30S subunit head. Binds mRNA in the 70S ribosome, positioning it for translation. The protein is Small ribosomal subunit protein uS3 of Prochlorococcus marinus subsp. pastoris (strain CCMP1986 / NIES-2087 / MED4).